The sequence spans 665 residues: MEVSGPEDDPFLSQLHQVQCPVCQQMMPAAHINSHLDRCLLLHPAGHAEPAAGSHRAGERAKGPSPPGAKRRRLSESSALKQPATPTAAESSEGEGEEGDDGGETESRESYDAPPTPSGARLIPDFPVARSSSPGRKGSGKRPAAAAAAGSASPRSWDEAEAQEEEEAVGDGDGDGDADADGEDDPGHWDADAAEAATAFGASGGGRPHPRALAAEEIRQMLQGKPLADTMRPDTLQDYFGQSKAVGQDTLLRSLLETNEIPSLILWGPPGCGKTTLAHIIASNSKKHSIRFVTLSATNAKTNDVRDVIKQAQNEKSFFKRKTILFIDEIHRFNKSQQDTFLPHVECGTITLIGATTENPSFQVNAALLSRCRVIVLEKLPVEAMVTILMRAINSLGIHVLDSSRPTDPLSHSSNSSSEPAMFIEDKAVDTLAYLSDGDARAGLNGLQLAVLARLSSRKMFCKKSGQSYSPSRVLITENDVKEGLQRSHILYDRAGEEHYNCISALHKSMRGSDQNASLYWLARMLEGGEDPLYVARRLVRFASEDIGLADPSALTQAVAAYQGCHFIGMPECEVLLAQCVVYFARAPKSIEVYSAYNNVKACLRNHQGPLPPVPLHLRNAPTRLMKDLGYGKGYKYNPMYSEPVDQEYLPEELRGVDFFKQRRC.

Residues 17–44 (QVQCPVCQQMMPAAHINSHLDRCLLLHP) form a UBZ4-type zinc finger. Residues Cys20, Cys23, His31, His35, and Cys39 each coordinate Zn(2+). Residues 48 to 190 (AEPAAGSHRA…DGEDDPGHWD (143 aa)) form a disordered region. Ser65 and Ser75 each carry phosphoserine. The span at 76-89 (ESSALKQPATPTAA) shows a compositional bias: polar residues. A Glycyl lysine isopeptide (Lys-Gly) (interchain with G-Cter in ubiquitin) cross-link involves residue Lys81. At Thr85 the chain carries Phosphothreonine. A phosphoserine mark is found at Ser91 and Ser92. A compositionally biased stretch (acidic residues) spans 92 to 104 (SEGEGEEGDDGGE). The residue at position 116 (Thr116) is a Phosphothreonine. The span at 130–155 (RSSSPGRKGSGKRPAAAAAAGSASPR) shows a compositional bias: low complexity. Residue Ser139 is modified to Phosphoserine. Residue Lys141 forms a Glycyl lysine isopeptide (Lys-Gly) (interchain with G-Cter in ubiquitin) linkage. Phosphoserine is present on Ser153. A compositionally biased stretch (acidic residues) spans 159–184 (EAEAQEEEEAVGDGDGDGDADADGED). A Glycyl lysine isopeptide (Lys-Gly) (interchain with G-Cter in ubiquitin) cross-link involves residue Lys225. An ATP-binding site is contributed by 270 to 276 (PGCGKTT). Glycyl lysine isopeptide (Lys-Gly) (interchain with G-Cter in ubiquitin) cross-links involve residues Lys301, Lys310, Lys316, Lys322, and Lys335. Lys482 participates in a covalent cross-link: Glycyl lysine isopeptide (Lys-Gly) (interchain with G-Cter in SUMO2); alternate. Lys482 participates in a covalent cross-link: Glycyl lysine isopeptide (Lys-Gly) (interchain with G-Cter in ubiquitin); alternate. Residues Tyr534 and Tyr562 each carry the phosphotyrosine modification. Lys627 participates in a covalent cross-link: Glycyl lysine isopeptide (Lys-Gly) (interchain with G-Cter in ubiquitin). A Glycyl lysine isopeptide (Lys-Gly) (interchain with G-Cter in ubiquitin); alternate cross-link involves residue Lys633. N6-acetyllysine; alternate is present on Lys633. Lys636 is covalently cross-linked (Glycyl lysine isopeptide (Lys-Gly) (interchain with G-Cter in ubiquitin)).

This sequence belongs to the AAA ATPase family. RarA/MGS1/WRNIP1 subfamily. As to quaternary structure, forms homooligomers, possibly octamers. Directly interacts with POLD1, POLD2 and POLD4. Interacts with the N-terminal domain of WRN. Interacts (via UBZ4-type zinc finger) with monoubiquitin and polyubiquitin. Interacts with TRIM14 and PPP6C; these interactions positively regulate the RIGI signaling pathway. In terms of processing, sumoylated with SUMO1 and SUMO2/3. As to expression, ubiquitously expressed.

The protein localises to the nucleus. It is found in the cytoplasm. It carries out the reaction ATP + H2O = ADP + phosphate + H(+). Functionally, functions as a modulator of initiation or reinitiation events during DNA polymerase delta-mediated DNA synthesis. In the presence of ATP, stimulation of DNA polymerase delta-mediated DNA synthesis is decreased. Also plays a role in the innate immune defense against viruses. Stabilizes the RIGI dsRNA interaction and promotes RIGI 'Lys-63'-linked polyubiquitination. In turn, RIGI transmits the signal through mitochondrial MAVS. In Homo sapiens (Human), this protein is ATPase WRNIP1.